The primary structure comprises 183 residues: ATP-dependent protease subunit HslV (183 aa).

Residue T12 is part of the active site. 3 residues coordinate Na(+): A166, C169, and T172.

It belongs to the peptidase T1B family. HslV subfamily. A double ring-shaped homohexamer of HslV is capped on each side by a ring-shaped HslU homohexamer. The assembly of the HslU/HslV complex is dependent on binding of ATP.

It is found in the cytoplasm. The enzyme catalyses ATP-dependent cleavage of peptide bonds with broad specificity.. Allosterically activated by HslU binding. Protease subunit of a proteasome-like degradation complex believed to be a general protein degrading machinery. The chain is ATP-dependent protease subunit HslV from Afipia carboxidovorans (strain ATCC 49405 / DSM 1227 / KCTC 32145 / OM5) (Oligotropha carboxidovorans).